The following is a 79-amino-acid chain: Small ribosomal subunit protein bS16 (79 aa).

Belongs to the bacterial ribosomal protein bS16 family.

This Buchnera aphidicola subsp. Acyrthosiphon pisum (strain 5A) protein is Small ribosomal subunit protein bS16.